Consider the following 67-residue polypeptide: Mitotic-spindle organizing protein 1A (67 aa).

It belongs to the MOZART1 family. In terms of assembly, part of the gamma-tubulin complex. Interacts with GIP1 and GCP3. Mostly expressed in siliques and flowers, and, to a lower extent, in leaves, roots and seedlings, with highest levels in young tissues, meristematic cells, and the vasculature.

The protein localises to the cytoplasm. Its subcellular location is the cytoskeleton. It is found in the microtubule organizing center. The protein resides in the spindle. It localises to the nucleus. The protein localises to the phragmoplast. Its subcellular location is the nucleus envelope. Required for gamma-tubulin complex recruitment to the microtubule organizing centers (MTOCs). During mitosis, modulates gamma-tubulin complex localization, spindle stability and chromosomal segregation. Necessary for gametophyte development and embryogenesis. The chain is Mitotic-spindle organizing protein 1A (GIP2) from Arabidopsis thaliana (Mouse-ear cress).